Consider the following 430-residue polypeptide: Serine--tRNA ligase (430 aa).

An L-serine-binding site is contributed by Thr237–Glu239. Position 268-270 (Arg268–Glu270) interacts with ATP. An L-serine-binding site is contributed by Glu291. Residue Glu355–Ser358 coordinates ATP. Position 391 (Ser391) interacts with L-serine.

The protein belongs to the class-II aminoacyl-tRNA synthetase family. Type-1 seryl-tRNA synthetase subfamily. In terms of assembly, homodimer. The tRNA molecule binds across the dimer.

The protein localises to the cytoplasm. It carries out the reaction tRNA(Ser) + L-serine + ATP = L-seryl-tRNA(Ser) + AMP + diphosphate + H(+). The enzyme catalyses tRNA(Sec) + L-serine + ATP = L-seryl-tRNA(Sec) + AMP + diphosphate + H(+). Its pathway is aminoacyl-tRNA biosynthesis; selenocysteinyl-tRNA(Sec) biosynthesis; L-seryl-tRNA(Sec) from L-serine and tRNA(Sec): step 1/1. Catalyzes the attachment of serine to tRNA(Ser). Is also able to aminoacylate tRNA(Sec) with serine, to form the misacylated tRNA L-seryl-tRNA(Sec), which will be further converted into selenocysteinyl-tRNA(Sec). In Serratia proteamaculans (strain 568), this protein is Serine--tRNA ligase.